Reading from the N-terminus, the 619-residue chain is Pentatricopeptide repeat-containing protein At3g22470, mitochondrial (619 aa).

A mitochondrion-targeting transit peptide spans Met1 to Tyr28. PPR repeat units lie at residues Thr69–His103, Asp104–Pro138, Asp139–Pro173, Asp174–Pro208, Asp209–Ala243, Ser244–Ala278, Asp279–Pro313, Asp314–Pro348, Asp349–Pro383, Asp384–Pro418, Asn419–Pro453, Ser454–Leu488, Gly489–Pro523, Asp524–Pro558, and Asp559–Ala593.

The protein belongs to the PPR family. P subfamily.

Its subcellular location is the mitochondrion. The protein is Pentatricopeptide repeat-containing protein At3g22470, mitochondrial of Arabidopsis thaliana (Mouse-ear cress).